The chain runs to 449 residues: tRNA (guanine(37)-N(1))-methyltransferase (449 aa).

Residues H216, 254 to 255, 282 to 283, and N345 each bind S-adenosyl-L-methionine; these read DL and DG.

Belongs to the class I-like SAM-binding methyltransferase superfamily. TRM5/TYW2 family. As to quaternary structure, monomer.

Its subcellular location is the mitochondrion matrix. It is found in the nucleus. The protein resides in the cytoplasm. The catalysed reaction is guanosine(37) in tRNA + S-adenosyl-L-methionine = N(1)-methylguanosine(37) in tRNA + S-adenosyl-L-homocysteine + H(+). Specifically methylates the N1 position of guanosine-37 in various cytoplasmic and mitochondrial tRNAs. Methylation is not dependent on the nature of the nucleoside 5' of the target nucleoside. This is the first step in the biosynthesis of wybutosine (yW), a modified base adjacent to the anticodon of tRNAs and required for accurate decoding. This chain is tRNA (guanine(37)-N(1))-methyltransferase, found in Candida albicans (strain WO-1) (Yeast).